The chain runs to 233 residues: Protein-L-isoaspartate O-methyltransferase (233 aa).

Residue Ser83 is part of the active site.

The protein belongs to the methyltransferase superfamily. L-isoaspartyl/D-aspartyl protein methyltransferase family.

The protein localises to the cytoplasm. It carries out the reaction [protein]-L-isoaspartate + S-adenosyl-L-methionine = [protein]-L-isoaspartate alpha-methyl ester + S-adenosyl-L-homocysteine. Functionally, catalyzes the methyl esterification of L-isoaspartyl residues in peptides and proteins that result from spontaneous decomposition of normal L-aspartyl and L-asparaginyl residues. It plays a role in the repair and/or degradation of damaged proteins. The sequence is that of Protein-L-isoaspartate O-methyltransferase from Opitutus terrae (strain DSM 11246 / JCM 15787 / PB90-1).